A 101-amino-acid chain; its full sequence is MAEIAVEVVYALPERQALLRLSVPAGTSAREAVLLSGIAEAFPGLDVQGCPLGIFGKLLARPEERVLETGERVEIYRPLIADPKEVRKQRAARARSEREGG.

Belongs to the UPF0125 (RnfH) family.

The sequence is that of Protein RnfH from Pseudomonas aeruginosa (strain UCBPP-PA14).